Reading from the N-terminus, the 309-residue chain is Vomeronasal type-1 receptor 46 (309 aa).

The Extracellular portion of the chain corresponds to 1-20 (MNKANIFCTDTNMKVILFSE). The helical transmembrane segment at 21–41 (VSVGISANSILFISHLCMFLG) threads the bilayer. Residues 42–50 (ESRPKPIDL) are Cytoplasmic-facing. A helical membrane pass occupies residues 51–71 (YIAFFSLTHLMLLVTMGLIAV). Topologically, residues 72-85 (DMFMPGGRWDSTTC) are extracellular. An intrachain disulfide couples cysteine 85 to cysteine 171. A helical transmembrane segment spans residues 86–106 (TFLMYLHIVLRGPTLCATCLL). At 107–134 (NVLWTITLSPRNSCLTKFKHKSPHHISG) the chain is on the cytoplasmic side. A helical transmembrane segment spans residues 135–155 (AFLFLCVLYMSLSSELLSITA). Topologically, residues 156–192 (SLNLTSENFLYVSQSCSILPMSYSIKSMFSTKMAIRE) are extracellular. Asparagine 158 carries N-linked (GlcNAc...) asparagine glycosylation. A helical membrane pass occupies residues 193-213 (AFLIGLMVLSSGYMVALLWSH). At 214–237 (KKQAQHLHSNSLSLKASPEQRATR) the chain is on the cytoplasmic side. Residues 238–258 (TIMLLMSFFVVFYILDSVIFY) traverse the membrane as a helical segment. Over 259–267 (SRMKFKDDS) the chain is Extracellular. A helical transmembrane segment spans residues 268–288 (IFVCVQIIVSHSYVTVSPFVF). At 289–309 (ICTEKHIIKFFWSLCGRIVNI) the chain is on the cytoplasmic side.

Belongs to the G-protein coupled receptor 1 family.

It is found in the cell membrane. Its function is as follows. Putative pheromone receptor implicated in the regulation of social and reproductive behavior. This is Vomeronasal type-1 receptor 46 (Vmn1r46) from Mus musculus (Mouse).